The chain runs to 368 residues: Core-capsid bridging protein (368 aa).

2 disordered regions span residues 17–49 (EIYGPPKKEEQDYKPRKLKRVKKKKKDDDDELD) and 307–340 (GYRGYTYRPRRRATTRRRTTTGTRRRRRRRQPVL). Residues 22 to 31 (PKKEEQDYKP) are compositionally biased toward basic and acidic residues. 2 stretches are compositionally biased toward basic residues: residues 32–41 (RKLKRVKKKK) and 314–337 (RPRRRATTRRRTTTGTRRRRRRRQ).

Belongs to the adenoviridae core-capsid bridging protein family. As to quaternary structure, monomer. Homodimer. Exists in equilibrium between monomers and dimers in solution. Interacts with the histone-like nucleoprotein; this interactions bridge the virus core to the capsid. Interacts with core protein X; this interactions bridge the virus core to the capsid. Interacts with the endosome lysis protein VI; this interactions bridge the virus core to the capsid. Interacts with the peripentonal hexons. Interacts with host NPM1; this interaction might play a role in virus assembly. Post-translationally, during virion entry, is ubiquitinated at the nuclear pore complex by host MIB1. This dissociates viral genomic DNA from capsid and allows genome delivery into nucleus for infection.

The protein resides in the virion. It is found in the host nucleus. Its subcellular location is the host nucleolus. Its function is as follows. Associates loosely with the viral DNA to form an outer shell around the nucleoprotein-DNA complex and links it with the capsid by binding the endosome lysis protein. During entry, secures the viral genome in the capsid until it reaches the nuclear pore complex, preventing innate immunity responses. Dissociates from the viral genome at nuclear pore. Might be involved in nuclear capsid assembly of the viral particles through its association with NPM1/nucleophosmin. The polypeptide is Core-capsid bridging protein (Human adenovirus C serotype 5 (HAdV-5)).